Consider the following 314-residue polypeptide: DNA-directed RNA polymerase subunit alpha (314 aa).

The interval 1 to 228 is alpha N-terminal domain (alpha-NTD); it reads MIEIEKPKIE…EHLNIFVGLT (228 aa). Residues 246 to 314 are alpha C-terminal domain (alpha-CTD); that stretch reads EKVLEMTIEE…ELGLGLRKDD (69 aa).

This sequence belongs to the RNA polymerase alpha chain family. As to quaternary structure, homodimer. The RNAP catalytic core consists of 2 alpha, 1 beta, 1 beta' and 1 omega subunit. When a sigma factor is associated with the core the holoenzyme is formed, which can initiate transcription.

It carries out the reaction RNA(n) + a ribonucleoside 5'-triphosphate = RNA(n+1) + diphosphate. Its function is as follows. DNA-dependent RNA polymerase catalyzes the transcription of DNA into RNA using the four ribonucleoside triphosphates as substrates. In Bacillus pumilus (strain SAFR-032), this protein is DNA-directed RNA polymerase subunit alpha.